The primary structure comprises 263 residues: uncharacterized protein (263 aa).

Position 13–20 (13–20 (TGSTSGIG)) interacts with NADP(+). S141 lines the substrate pocket. Y154 serves as the catalytic Proton acceptor.

Belongs to the short-chain dehydrogenases/reductases (SDR) family.

This is an uncharacterized protein from Bacillus subtilis (strain 168).